The primary structure comprises 186 residues: Ribosome-recycling factor (186 aa).

This sequence belongs to the RRF family.

Its subcellular location is the cytoplasm. Functionally, responsible for the release of ribosomes from messenger RNA at the termination of protein biosynthesis. May increase the efficiency of translation by recycling ribosomes from one round of translation to another. The chain is Ribosome-recycling factor from Amoebophilus asiaticus (strain 5a2).